Reading from the N-terminus, the 575-residue chain is Putative export ATP-binding/permease protein RBE_0492 (575 aa).

Residues leucine 20–leucine 303 enclose the ABC transmembrane type-1 domain. 6 helical membrane-spanning segments follow: residues isoleucine 21–phenylalanine 41, isoleucine 61–phenylalanine 81, phenylalanine 135–phenylalanine 155, phenylalanine 158–phenylalanine 178, alanine 242–isoleucine 262, and isoleucine 277–leucine 297. Residues leucine 336–glutamate 571 form the ABC transporter domain. Glycine 371–serine 378 contributes to the ATP binding site.

The protein belongs to the ABC transporter superfamily. As to quaternary structure, homodimer.

It is found in the cell inner membrane. In terms of biological role, part of an ABC transporter complex. Transmembrane domains (TMD) form a pore in the inner membrane and the ATP-binding domain (NBD) is responsible for energy generation. The protein is Putative export ATP-binding/permease protein RBE_0492 of Rickettsia bellii (strain RML369-C).